Reading from the N-terminus, the 148-residue chain is Urease accessory protein UreE (148 aa).

The protein belongs to the UreE family.

The protein localises to the cytoplasm. In terms of biological role, involved in urease metallocenter assembly. Binds nickel. Probably functions as a nickel donor during metallocenter assembly. This Bacillus sp. (strain TB-90) protein is Urease accessory protein UreE.